Reading from the N-terminus, the 514-residue chain is 2,3-bisphosphoglycerate-independent phosphoglycerate mutase (514 aa).

Residues D14 and S64 each coordinate Mn(2+). S64 functions as the Phosphoserine intermediate in the catalytic mechanism. Residues H125, 155–156 (RD), R187, R193, 263–266 (RADR), and K336 each bind substrate. Mn(2+) contacts are provided by D403, H407, D444, H445, and H463.

It belongs to the BPG-independent phosphoglycerate mutase family. As to quaternary structure, monomer. The cofactor is Mn(2+).

The enzyme catalyses (2R)-2-phosphoglycerate = (2R)-3-phosphoglycerate. Its pathway is carbohydrate degradation; glycolysis; pyruvate from D-glyceraldehyde 3-phosphate: step 3/5. Catalyzes the interconversion of 2-phosphoglycerate and 3-phosphoglycerate. This chain is 2,3-bisphosphoglycerate-independent phosphoglycerate mutase, found in Shewanella sediminis (strain HAW-EB3).